The sequence spans 250 residues: Ubiquinone/menaquinone biosynthesis C-methyltransferase UbiE (250 aa).

S-adenosyl-L-methionine contacts are provided by residues T73, D94, and 122–123 (DA).

It belongs to the class I-like SAM-binding methyltransferase superfamily. MenG/UbiE family.

The enzyme catalyses a 2-demethylmenaquinol + S-adenosyl-L-methionine = a menaquinol + S-adenosyl-L-homocysteine + H(+). The catalysed reaction is a 2-methoxy-6-(all-trans-polyprenyl)benzene-1,4-diol + S-adenosyl-L-methionine = a 5-methoxy-2-methyl-3-(all-trans-polyprenyl)benzene-1,4-diol + S-adenosyl-L-homocysteine + H(+). Its pathway is quinol/quinone metabolism; menaquinone biosynthesis; menaquinol from 1,4-dihydroxy-2-naphthoate: step 2/2. It participates in cofactor biosynthesis; ubiquinone biosynthesis. Functionally, methyltransferase required for the conversion of demethylmenaquinol (DMKH2) to menaquinol (MKH2) and the conversion of 2-polyprenyl-6-methoxy-1,4-benzoquinol (DDMQH2) to 2-polyprenyl-3-methyl-6-methoxy-1,4-benzoquinol (DMQH2). The protein is Ubiquinone/menaquinone biosynthesis C-methyltransferase UbiE of Coxiella burnetii (strain RSA 493 / Nine Mile phase I).